Here is a 1134-residue protein sequence, read N- to C-terminus: Myosin-4 (1134 aa).

The region spanning 110–160 is the Myosin N-terminal SH3-like domain; that stretch reads REKLCVWCRVAANGQWHLGKIHSTSSSDDVCVMLSANDDVRTMEEIFPANP. The region spanning 164–830 is the Myosin motor domain; it reads EGVEDLTQLS…VISVLEERKK (667 aa). Residues 255–262 and 304–312 each bind ATP; these read GESGAGKT and NDNSSRFGK. 2 actin-binding regions span residues 589 to 623 and 710 to 732; these read LIEK…KQHL and LFKL…KPNS. IQ domains lie at 832-861, 855-884, and 891-920; these read VLRG…AAVI, MRNA…SAIV, and ELDA…KNKP. The interval 913–939 is disordered; that stretch reads STQQKNKPRNEKKKTRRKSTKRVSEDK. Over residues 918–933 the composition is skewed to basic residues; sequence NKPRNEKKKTRRKSTK. A coiled-coil region spans residues 953–999; sequence LADLQSRVLKVEAAIMQKEDENTALQEELQRFEERWLENETRMKSME.

Belongs to the TRAFAC class myosin-kinesin ATPase superfamily. Myosin family. Plant myosin class VIII subfamily. Homodimer.

Functionally, myosin heavy chain that is required for the cell cycle-regulated transport of various organelles and proteins for their segregation. Functions by binding with its tail domain to receptor proteins on organelles and exerting force with its N-terminal motor domain against actin filaments, thereby transporting its cargo along polarized actin cables. This chain is Myosin-4 (VIII-B), found in Arabidopsis thaliana (Mouse-ear cress).